We begin with the raw amino-acid sequence, 337 residues long: Glyceraldehyde-3-phosphate dehydrogenase (337 aa).

Residues 12–13 (RI), Asp-34, and Arg-79 each bind NAD(+). Residues 150 to 152 (SCT), Thr-181, 210 to 211 (TG), and Arg-233 each bind D-glyceraldehyde 3-phosphate. Cys-151 serves as the catalytic Nucleophile. Asn-315 is an NAD(+) binding site.

It belongs to the glyceraldehyde-3-phosphate dehydrogenase family. As to quaternary structure, homotetramer.

It is found in the cytoplasm. It catalyses the reaction D-glyceraldehyde 3-phosphate + phosphate + NAD(+) = (2R)-3-phospho-glyceroyl phosphate + NADH + H(+). It participates in carbohydrate degradation; glycolysis; pyruvate from D-glyceraldehyde 3-phosphate: step 1/5. The protein is Glyceraldehyde-3-phosphate dehydrogenase (GPD) of Omphalotus olearius (Jack o'lantern).